A 519-amino-acid chain; its full sequence is MSEKEQQEQQNTSGNGVEKIRTMIEGFDDISHGGLPVGRTTLVSGTSGTGKTLLSLQFLFNGISFFDEPGVFVTFEESPSDIIKNAHIFGWNLQRLINEGKLFILDASPDPEGQDIVGNFDLSALIERLQYAIRKYKAKRVSIDSITAVFQQYEAVGVVRREIFRLVARLKQLNVTTIITTERSEEYGPVASFGVEEFVSDNVVIARNVLEGERRRRTIEILKLRGTTHMKGEYPFTITNDGVNIFPLGAMRLTQRSSNVRVSSGVKTLDGMCGGGFFKDSIILATGATGTGKTLLVSKFLQNGCVNNERAILFAYEESRAQLSRNAYSWGIDFEELESQGLLKIICTYPESTGLEDHLQIIKSEIAYFKPARIAIDSLSALARGVSNNAFRQFVIGVTGYAKQEEITGFFTNTTDQFMGSHSITDSHISTITDTILMLQYVEIRGEMSRAINVFKMRGSWHDKGIREYNITADGPEIQDSFRNYERIVSGSPTRVSIDEKAELSRIVRRFEDKQGSDS.

KaiC domains are found at residues 1-246 and 260-519; these read MSEK…VNIF and VRVS…GSDS. ATP-binding residues include Gly48, Thr49, Gly50, Lys51, Thr52, Leu53, Lys223, Leu224, Arg225, Thr227, His229, Thr239, Thr289, Gly290, Thr291, Gly292, Lys293, Thr294, and Leu295. Thr52 provides a ligand contact to Mg(2+). Thr294 contributes to the Mg(2+) binding site. Glu317 contributes to the Mg(2+) binding site. Trp330 provides a ligand contact to ATP. Ser430 is modified (phosphoserine; by autocatalysis). Residue Thr431 is modified to Phosphothreonine; by autocatalysis. ATP contacts are provided by Arg450, Lys456, Met457, Arg458, Ser460, His462, and Lys464.

It belongs to the KaiC family. In terms of assembly, homohexamer; hexamerization is dependent on ATP-binding. The KaiABC complex composition changes during the circadian cycle to control KaiC phosphorylation. Complexes KaiC(6), KaiA(2-4):KaiC(6), KaiB(6):KaiC(6) and KaiC(6):KaiB(6):KaiA(12) are among the most important forms, many form cooperatively. KaiC interacts with SasA, activating its autokinase function and leading to RpaA activation. Requires Mg(2+) as cofactor. In terms of processing, phosphorylated on serine and threonine residues by autocatalysis. Has a 4 step phosphorylation cycle; the autokinase acts first on Thr-431, then Ser-430. When Ser-430 is modified KaiC switches to an autophosphatase mode, acting first on phospho-Thr-431 then phospho-Ser-430.

It carries out the reaction L-seryl-[protein] + ATP = O-phospho-L-seryl-[protein] + ADP + H(+). The catalysed reaction is L-threonyl-[protein] + ATP = O-phospho-L-threonyl-[protein] + ADP + H(+). The enzyme catalyses ATP + H2O = ADP + phosphate + H(+). With respect to regulation, the interaction with KaiA enhances its phosphorylation status, while the interaction with KaiB decreases it. Central component of the KaiABC oscillator complex, which constitutes the main circadian regulator in cyanobacteria. Complex composition changes during the circadian cycle to control KaiC phosphorylation. KaiA stimulates KaiC autophosphorylation, while KaiB sequesters KaiA, leading to KaiC autodephosphorylation. Clock output pathways impact the RpaA transcriptional regulator. KaiC enhances the autophosphorylation activity of SasA, which then transfers its phosphate group to RpaA to activate it. KaiB and KaiC together enhance the phospho-RpaA dephosphatase activity of CikA. Functionally, has a weak, temperature-independent ATPase activity; ATPase activity defines the circadian period. The phosphorylation state of KaiC modulates its ATPase activity and effects KaiB binding. In Nostoc sp. (strain PCC 7120 / SAG 25.82 / UTEX 2576), this protein is Circadian clock oscillator protein KaiC.